Consider the following 159-residue polypeptide: Transmembrane protein 42 (159 aa).

4 helical membrane passes run 37 to 57 (FWGV…AASA), 68 to 88 (GFCV…WTFF), 100 to 120 (IASV…GFVL), and 124 to 144 (CQEV…TLIH).

It is found in the membrane. This chain is Transmembrane protein 42 (TMEM42), found in Bos taurus (Bovine).